A 299-amino-acid polypeptide reads, in one-letter code: ATP phosphoribosyltransferase (299 aa).

It belongs to the ATP phosphoribosyltransferase family. Long subfamily. Equilibrium between an active dimeric form, an inactive hexameric form and higher aggregates. Interconversion between the various forms is largely reversible and is influenced by the natural substrates and inhibitors of the enzyme. Requires Mg(2+) as cofactor.

The protein localises to the cytoplasm. It catalyses the reaction 1-(5-phospho-beta-D-ribosyl)-ATP + diphosphate = 5-phospho-alpha-D-ribose 1-diphosphate + ATP. Its pathway is amino-acid biosynthesis; L-histidine biosynthesis; L-histidine from 5-phospho-alpha-D-ribose 1-diphosphate: step 1/9. Its activity is regulated as follows. Feedback inhibited by histidine. Its function is as follows. Catalyzes the condensation of ATP and 5-phosphoribose 1-diphosphate to form N'-(5'-phosphoribosyl)-ATP (PR-ATP). Has a crucial role in the pathway because the rate of histidine biosynthesis seems to be controlled primarily by regulation of HisG enzymatic activity. This is ATP phosphoribosyltransferase from Sodalis glossinidius (strain morsitans).